The primary structure comprises 103 residues: UPF0145 protein HH_1800 (103 aa).

Belongs to the UPF0145 family.

This Helicobacter hepaticus (strain ATCC 51449 / 3B1) protein is UPF0145 protein HH_1800.